Reading from the N-terminus, the 251-residue chain is Ditrans,polycis-undecaprenyl-diphosphate synthase ((2E,6E)-farnesyl-diphosphate specific) (251 aa).

The active site involves D20. D20 serves as a coordination point for Mg(2+). Substrate is bound by residues 21–24, W25, R33, H37, and 65–67; these read GNGR and SSE. Catalysis depends on N68, which acts as the Proton acceptor. Residues W69, R71, R188, and 194 to 196 contribute to the substrate site; that span reads RIS. E207 is a binding site for Mg(2+).

This sequence belongs to the UPP synthase family. In terms of assembly, homodimer. Mg(2+) is required as a cofactor.

It catalyses the reaction 8 isopentenyl diphosphate + (2E,6E)-farnesyl diphosphate = di-trans,octa-cis-undecaprenyl diphosphate + 8 diphosphate. In terms of biological role, catalyzes the sequential condensation of isopentenyl diphosphate (IPP) with (2E,6E)-farnesyl diphosphate (E,E-FPP) to yield (2Z,6Z,10Z,14Z,18Z,22Z,26Z,30Z,34E,38E)-undecaprenyl diphosphate (di-trans,octa-cis-UPP). UPP is the precursor of glycosyl carrier lipid in the biosynthesis of bacterial cell wall polysaccharide components such as peptidoglycan and lipopolysaccharide. In Vibrio vulnificus (strain CMCP6), this protein is Ditrans,polycis-undecaprenyl-diphosphate synthase ((2E,6E)-farnesyl-diphosphate specific).